Consider the following 144-residue polypeptide: Large ribosomal subunit protein uL15 (144 aa).

The segment at 1-54 (MRLNTLSPAEGSKKAGKRLGRGIGSGLGKTGGRGHKGQKSRSGGGVRRGFEGGQ) is disordered. The segment covering 21–31 (RGIGSGLGKTG) has biased composition (gly residues).

Belongs to the universal ribosomal protein uL15 family. Part of the 50S ribosomal subunit.

In terms of biological role, binds to the 23S rRNA. This chain is Large ribosomal subunit protein uL15, found in Salmonella enteritidis PT4 (strain P125109).